The sequence spans 297 residues: IMPACT family member C14C8.09c (297 aa).

Residues Leu225–Asn255 adopt a coiled-coil conformation. Composition is skewed to basic and acidic residues over residues Glu228–Asn250 and Ser280–Glu297. Positions Glu228 to Glu297 are disordered.

This sequence belongs to the IMPACT family.

In Schizosaccharomyces pombe (strain 972 / ATCC 24843) (Fission yeast), this protein is IMPACT family member C14C8.09c.